We begin with the raw amino-acid sequence, 530 residues long: Serendipity locus protein alpha (530 aa).

Transient expression in blastoderm from nuclear cycle 11 to the onset of gastrulation.

Its subcellular location is the cytoplasm. It localises to the cell membrane. Functionally, required for the cellularization of the syncytial blastoderm embryo. Involved in the localization of the actin filaments just prior to and during plasma membrane invagination. Sry-alpha together with nullo and bnk may provide auxiliary functions, by acting both to stabilize a large and dynamic microfilament structure and regulate its functions. The sequence is that of Serendipity locus protein alpha (Sry-alpha) from Drosophila melanogaster (Fruit fly).